Here is a 637-residue protein sequence, read N- to C-terminus: Multicopper oxidase LPR1 homolog 5 (637 aa).

Residues methionine 1–alanine 21 form the signal peptide. Residue asparagine 100 is glycosylated (N-linked (GlcNAc...) asparagine). Cu cation contacts are provided by histidine 209 and histidine 211. Residue asparagine 234 is glycosylated (N-linked (GlcNAc...) asparagine). The Cu cation site is built by histidine 257 and histidine 259. N-linked (GlcNAc...) asparagine glycans are attached at residues asparagine 308, asparagine 349, asparagine 357, asparagine 425, asparagine 482, and asparagine 516. The 73-residue stretch at proline 334–alanine 406 folds into the Plastocyanin-like domain. Residues histidine 522, histidine 525, and histidine 527 each coordinate Cu cation. Residue asparagine 553 is glycosylated (N-linked (GlcNAc...) asparagine). Positions 618, 619, 620, 624, and 629 each coordinate Cu cation.

It belongs to the multicopper oxidase family. Cu cation serves as cofactor. As to expression, highly expressed in roots and basal stems.

Its subcellular location is the endoplasmic reticulum membrane. Functionally, multicopper oxidase that may play a role in the maintenance of inorganic phosphate homeostasis. The sequence is that of Multicopper oxidase LPR1 homolog 5 from Oryza sativa subsp. japonica (Rice).